The sequence spans 182 residues: Large ribosomal subunit protein bL17 (182 aa).

A disordered region spans residues 126 to 182 (ERANRVAASKAKKAEAEAAEAKAEEAEEAPEVEADTATDKAAEAEAAEAADEAAEDK). Residues 137–149 (KKAEAEAAEAKAE) are compositionally biased toward basic and acidic residues. Acidic residues-rich tracts occupy residues 150-161 (EAEEAPEVEADT) and 170-182 (EAAE…AEDK).

This sequence belongs to the bacterial ribosomal protein bL17 family. As to quaternary structure, part of the 50S ribosomal subunit. Contacts protein L32.

This chain is Large ribosomal subunit protein bL17, found in Corynebacterium jeikeium (strain K411).